The sequence spans 288 residues: Quinate/shikimate dehydrogenase (288 aa).

Positions 71 and 107 each coordinate substrate. NAD(+) is bound by residues 132 to 135, 155 to 158, Lys205, 232 to 235, and Gly255; these read AGGA, NRRD, and CVYN.

This sequence belongs to the shikimate dehydrogenase family. In terms of assembly, homodimer.

The enzyme catalyses L-quinate + NAD(+) = 3-dehydroquinate + NADH + H(+). It catalyses the reaction L-quinate + NADP(+) = 3-dehydroquinate + NADPH + H(+). It carries out the reaction shikimate + NADP(+) = 3-dehydroshikimate + NADPH + H(+). The catalysed reaction is shikimate + NAD(+) = 3-dehydroshikimate + NADH + H(+). It participates in metabolic intermediate biosynthesis; chorismate biosynthesis; chorismate from D-erythrose 4-phosphate and phosphoenolpyruvate: step 4/7. Functionally, the actual biological function of YdiB remains unclear, nor is it known whether 3-dehydroshikimate or quinate represents the natural substrate. Catalyzes the reversible NAD-dependent reduction of both 3-dehydroshikimate (DHSA) and 3-dehydroquinate to yield shikimate (SA) and quinate, respectively. It can use both NAD or NADP for catalysis, however it has higher catalytic efficiency with NAD. The chain is Quinate/shikimate dehydrogenase from Shigella sonnei (strain Ss046).